Consider the following 112-residue polypeptide: Ribonuclease P protein component (112 aa).

It belongs to the RnpA family. Consists of a catalytic RNA component (M1 or rnpB) and a protein subunit.

The catalysed reaction is Endonucleolytic cleavage of RNA, removing 5'-extranucleotides from tRNA precursor.. In terms of biological role, RNaseP catalyzes the removal of the 5'-leader sequence from pre-tRNA to produce the mature 5'-terminus. It can also cleave other RNA substrates such as 4.5S RNA. The protein component plays an auxiliary but essential role in vivo by binding to the 5'-leader sequence and broadening the substrate specificity of the ribozyme. In Pelotomaculum thermopropionicum (strain DSM 13744 / JCM 10971 / SI), this protein is Ribonuclease P protein component.